The sequence spans 245 residues: Ubiquinone/menaquinone biosynthesis C-methyltransferase UbiE (245 aa).

Residues T71, D92, and 118–119 each bind S-adenosyl-L-methionine; that span reads DA.

The protein belongs to the class I-like SAM-binding methyltransferase superfamily. MenG/UbiE family.

It carries out the reaction a 2-demethylmenaquinol + S-adenosyl-L-methionine = a menaquinol + S-adenosyl-L-homocysteine + H(+). The catalysed reaction is a 2-methoxy-6-(all-trans-polyprenyl)benzene-1,4-diol + S-adenosyl-L-methionine = a 5-methoxy-2-methyl-3-(all-trans-polyprenyl)benzene-1,4-diol + S-adenosyl-L-homocysteine + H(+). Its pathway is quinol/quinone metabolism; menaquinone biosynthesis; menaquinol from 1,4-dihydroxy-2-naphthoate: step 2/2. The protein operates within cofactor biosynthesis; ubiquinone biosynthesis. Functionally, methyltransferase required for the conversion of demethylmenaquinol (DMKH2) to menaquinol (MKH2) and the conversion of 2-polyprenyl-6-methoxy-1,4-benzoquinol (DDMQH2) to 2-polyprenyl-3-methyl-6-methoxy-1,4-benzoquinol (DMQH2). This is Ubiquinone/menaquinone biosynthesis C-methyltransferase UbiE from Neisseria meningitidis serogroup C (strain 053442).